Here is a 341-residue protein sequence, read N- to C-terminus: Nucleoid-associated protein Sden_2335 (341 aa).

The protein belongs to the YejK family.

Its subcellular location is the cytoplasm. The protein localises to the nucleoid. This chain is Nucleoid-associated protein Sden_2335, found in Shewanella denitrificans (strain OS217 / ATCC BAA-1090 / DSM 15013).